We begin with the raw amino-acid sequence, 378 residues long: Spermidine/putrescine import ATP-binding protein PotA (378 aa).

Residues V18 to I248 enclose the ABC transporter domain. G50–T57 is an ATP binding site.

This sequence belongs to the ABC transporter superfamily. Spermidine/putrescine importer (TC 3.A.1.11.1) family. The complex is composed of two ATP-binding proteins (PotA), two transmembrane proteins (PotB and PotC) and a solute-binding protein (PotD).

It is found in the cell inner membrane. The enzyme catalyses ATP + H2O + polyamine-[polyamine-binding protein]Side 1 = ADP + phosphate + polyamineSide 2 + [polyamine-binding protein]Side 1.. Part of the ABC transporter complex PotABCD involved in spermidine/putrescine import. Responsible for energy coupling to the transport system. The polypeptide is Spermidine/putrescine import ATP-binding protein PotA (Shigella flexneri).